The chain runs to 103 residues: Nucleoid-associated protein SUN_2278 (103 aa).

The protein belongs to the YbaB/EbfC family. In terms of assembly, homodimer.

It is found in the cytoplasm. Its subcellular location is the nucleoid. Functionally, binds to DNA and alters its conformation. May be involved in regulation of gene expression, nucleoid organization and DNA protection. The chain is Nucleoid-associated protein SUN_2278 from Sulfurovum sp. (strain NBC37-1).